Consider the following 225-residue polypeptide: MTTSSFVVYDFDTPLFEDIVKERINRFVVITQSGKLCHLHDPGRLKELIYPGNRILIREHKGRKTNYMVLAAHSGTGWVVTDSSIHNKIARNFLPSDVKSEVKVNNSRLDFYYDNTFVEVKGCSLVVDGKALFPDAPTERGKRHLEELIKLKMQGYRSLILILVMRDDAICFSPNWKTDKKFSMAFKNAVEEGVEVTIKLLKLIDNKIWYIKDIQLCPDAFNYSH.

This sequence belongs to the SfsA family.

This is Sugar fermentation stimulation protein homolog from Sulfolobus acidocaldarius (strain ATCC 33909 / DSM 639 / JCM 8929 / NBRC 15157 / NCIMB 11770).